The following is a 510-amino-acid chain: Mitochondrial metal transporter 1 (510 aa).

Positions 120 to 141 (ADKPSSLNLHSHTHSHGHTHSH) are disordered. Residues 130 to 141 (SHTHSHGHTHSH) are compositionally biased toward basic residues. 6 helical membrane passes run 165–185 (WVGL…GIVF), 194–214 (AIHA…VGLA), 241–261 (LAMA…GPVI), 286–306 (VTDI…EWIF), 333–353 (LTSL…IQSL), and 356–376 (IGGL…MCIA).

Belongs to the cation diffusion facilitator (CDF) transporter (TC 2.A.4) family. SLC30A subfamily.

It is found in the mitochondrion membrane. Its function is as follows. Mitochondrial metal transporter involved in mitochondrial iron accumulation. The sequence is that of Mitochondrial metal transporter 1 (MMT1) from Saccharomyces cerevisiae (strain ATCC 204508 / S288c) (Baker's yeast).